Consider the following 400-residue polypeptide: MEKMTTLKSFESKGILTSTPIRGAGDGMETEEPPKSVEVTHGVQPINQHVLPSPRKKVPSDSPGVLQLGKILNEKTVEVEAVRIFVPKAAITHDIPTKSAKVKSLGHHREELHNQSEVVTDPRKELSEVKKVLEKLKNSERRLLQDKEGLSNQLRVQTEVNRELKKLLVASVGDDPQYHFERLAREKNQLILENEALGRNTAQLSEQLERMSIQCDVWRSKFLASRVMADELTNFRVVLQHQNRDAQSAIQDLLSEREQFRQEMISTQKFLEELLVSLQWGREQTYSPNTQPHSTADLALTNHRLAEAVHAHLLGNVGISHPKRTPATAEVCSTPAEKMAEKVLRILDPVACTESSPDNAFAESTLLTTKKNIGRFHPYTRYENITFNCCSHCQGELLAL.

The interval 1-36 is disordered; the sequence is MEKMTTLKSFESKGILTSTPIRGAGDGMETEEPPKS. Positions 22-26 match the Tankyrase-binding motif motif; the sequence is RGAGD. S53 carries the post-translational modification Phosphoserine. A coiled-coil region spans residues 126 to 263; sequence LSEVKKVLEK…LSEREQFRQE (138 aa). Position 356 is a phosphoserine (S356). Residues 394 to 400 form an essential for interaction with GORASP2 region; sequence QGELLAL.

As to quaternary structure, interacts with GORASP2. Interacts with the GTP-bound form of RAB2, but not with other Golgi Rab proteins. Identified in a complex with RAB2 and GORASP2. In terms of processing, ADP-ribosylated by tankyrase TNKS and TNKS2. Poly-ADP-ribosylated protein is recognized by RNF146, followed by ubiquitination. Ubiquitinated by RNF146 when poly-ADP-ribosylated, leading to its degradation.

Its subcellular location is the golgi apparatus membrane. Required for normal Golgi structure and for protein transport from the endoplasmic reticulum (ER) through the Golgi apparatus to the cell surface. The polypeptide is Golgin-45 (Rattus norvegicus (Rat)).